Consider the following 480-residue polypeptide: Glutamate--tRNA ligase (480 aa).

The 'HIGH' region signature appears at 21 to 31 (PSPTGYLHVGG). Positions 110, 112, 137, and 139 each coordinate Zn(2+). The 'KMSKS' region signature appears at 248-252 (KLSKR). An ATP-binding site is contributed by K251.

The protein belongs to the class-I aminoacyl-tRNA synthetase family. Glutamate--tRNA ligase type 1 subfamily. As to quaternary structure, monomer. The cofactor is Zn(2+).

It is found in the cytoplasm. The catalysed reaction is tRNA(Glu) + L-glutamate + ATP = L-glutamyl-tRNA(Glu) + AMP + diphosphate. Catalyzes the attachment of glutamate to tRNA(Glu) in a two-step reaction: glutamate is first activated by ATP to form Glu-AMP and then transferred to the acceptor end of tRNA(Glu). The sequence is that of Glutamate--tRNA ligase from Actinobacillus succinogenes (strain ATCC 55618 / DSM 22257 / CCUG 43843 / 130Z).